The following is a 653-amino-acid chain: Cytidine monophosphate-N-acetylneuraminic acid hydroxylase (653 aa).

The Rieske domain maps to 11–120 (LSPEETSELK…PEYNEDGSLD (110 aa)). Cys62, His64, Cys83, and His86 together coordinate [2Fe-2S] cluster. A disordered region spans residues 596-622 (WNPSQATPAVEAKDPSSDSKDSATKPG). A compositionally biased stretch (basic and acidic residues) spans 606–618 (EAKDPSSDSKDSA). A helical membrane pass occupies residues 630-647 (LLRPLGIVVALVGVGVAI).

This sequence belongs to the CMP-Neu5Ac hydroxylase family. It depends on [2Fe-2S] cluster as a cofactor.

Its subcellular location is the membrane. It carries out the reaction CMP-N-acetyl-beta-neuraminate + 2 Fe(II)-[cytochrome b5] + O2 + 2 H(+) = CMP-N-glycoloyl-beta-neuraminate + 2 Fe(III)-[cytochrome b5] + H2O. The protein operates within amino-sugar metabolism; N-acetylneuraminate metabolism. Its function is as follows. Sialic acids are components of carbohydrate chains of glycoconjugates and are involved in cell-cell recognition and cell-pathogen interactions. Catalyzes the conversion of CMP-N-acetylneuraminic acid (CMP-Neu5Ac) into its hydroxylated derivative CMP-N-glycolylneuraminic acid (CMP-Neu5Gc), a sialic acid abundantly expressed at the surface of many cells. This chain is Cytidine monophosphate-N-acetylneuraminic acid hydroxylase (cnh), found in Asterias rubens (Common European starfish).